The following is a 188-amino-acid chain: Elongation factor P (188 aa).

Position 34 is an N6-(3,6-diaminohexanoyl)-5-hydroxylysine (Lys-34).

Belongs to the elongation factor P family. May be beta-lysylated on the epsilon-amino group of Lys-34 by the combined action of EpmA and EpmB, and then hydroxylated on the C5 position of the same residue by EpmC (if this protein is present). Lysylation is critical for the stimulatory effect of EF-P on peptide-bond formation. The lysylation moiety may extend toward the peptidyltransferase center and stabilize the terminal 3-CCA end of the tRNA. Hydroxylation of the C5 position on Lys-34 may allow additional potential stabilizing hydrogen-bond interactions with the P-tRNA.

It localises to the cytoplasm. It functions in the pathway protein biosynthesis; polypeptide chain elongation. Functionally, involved in peptide bond synthesis. Alleviates ribosome stalling that occurs when 3 or more consecutive Pro residues or the sequence PPG is present in a protein, possibly by augmenting the peptidyl transferase activity of the ribosome. Modification of Lys-34 is required for alleviation. This is Elongation factor P from Klebsiella pneumoniae (strain 342).